Consider the following 172-residue polypeptide: Gamma-crystallin-4 (172 aa).

2 Beta/gamma crystallin 'Greek key' domains span residues 1-37 (IFFY…RVES) and 38-80 (GNWI…RFIP). The segment at 81-85 (HPHSQ) is connecting peptide. Beta/gamma crystallin 'Greek key' domains lie at 86–126 (YKMR…NVSD) and 127–169 (GHWM…RRVH).

This sequence belongs to the beta/gamma-crystallin family. As to quaternary structure, monomer.

Crystallins are the dominant structural components of the vertebrate eye lens. This is Gamma-crystallin-4 (cryg4) from Xenopus laevis (African clawed frog).